We begin with the raw amino-acid sequence, 346 residues long: UPF0421 protein OB2406 (346 aa).

4 consecutive transmembrane segments (helical) span residues 16–36 (IAVL…VFAV), 55–75 (LIRF…IALF), 102–122 (LLVA…NYVM), and 128–148 (LFTT…LLPP).

This sequence belongs to the UPF0421 family.

The protein resides in the cell membrane. This Oceanobacillus iheyensis (strain DSM 14371 / CIP 107618 / JCM 11309 / KCTC 3954 / HTE831) protein is UPF0421 protein OB2406.